The primary structure comprises 286 residues: Master replication protein (286 aa).

Positions 2–96 (ARQVICWCFT…VEGPWEFGEF (95 aa)) constitute a CRESS-DNA virus Rep endonuclease domain. The short motif at 9–12 (CFTL) is the RCR-1 element. 2 residues coordinate a divalent metal cation: glutamate 33 and histidine 41. Residues 41-43 (HYQ) carry the RCR-2 motif. The Nuclear localization signal signature appears at 50–70 (KRTSLVQMKKLLPGAHLEKRR). Tyrosine 79 (for DNA cleavage activity) is an active-site residue. The RCR-3 signature appears at 79–82 (YAMK). Position 84 (aspartate 84) interacts with a divalent metal cation. A Nuclear localization signal motif is present at residues 96-102 (FKEVLED). 180–188 (GPQGGEGKT) is an ATP binding site.

The protein belongs to the nanoviridea/circoviridae replication-associated protein family. Homooligomer (Potential). Rep binds to repeated DNA motifs (iterons). The cofactor is Mg(2+). It depends on Mn(2+) as a cofactor.

Its subcellular location is the host nucleus. The catalysed reaction is ATP + H2O = ADP + phosphate + H(+). In terms of biological role, essential for the replication of all genomic viral ssDNA (trans-replication). The closed circular ssDNA genome is first converted to a superhelical dsDNA. Rep binds a specific hairpin at the genome origin of replication. Introduces an endonucleolytic nick within the conserved sequence 5'-A[GT]TATTAC-3' in the intergenic region of the genome, thereby initiating the rolling circle replication (RCR). Following cleavage, binds covalently to the 5'-phosphate of DNA as a tyrosyl ester. The cleavage gives rise to a free 3'-OH that serves as a primer for the cellular DNA polymerase. The polymerase synthesizes the (+) strand DNA by rolling circle mechanism. After one round of replication, a Rep-catalyzed nucleotidyl transfer reaction releases a circular single-stranded virus genome, thereby terminating the replication. Displays origin-specific DNA cleavage, nucleotidyl transferase, ATPase and helicase activities. The protein is Master replication protein (DNA-R) of Subterranean clover stunt virus (strain F) (SCSV).